Consider the following 29-residue polypeptide: Cyclotide mela-4 (29 aa).

A cross-link (cyclopeptide (Gly-Asn)) is located at residues 1–29; it reads GKPICGETCFKGKCYTPGCTCSYPICKKN. Intrachain disulfides connect Cys-5–Cys-19, Cys-9–Cys-21, and Cys-14–Cys-26.

In terms of processing, this is a cyclic peptide. Post-translationally, contains 3 disulfide bonds.

In terms of biological role, probably participates in a plant defense mechanism (Potential). Binds to and induces leakage in phospholipd membranes, particularly ones containing 1-palmitoyl-2-oleophosphatidylethanolamine (POPE). In vitro, displays cytotoxicity against cultured cells. Not active against Gram-negative bacterium E.coli ATCC 25922 or Gram-positive bacterium S.aureus ATCC 25923 up to a concentration of 64 uM. The sequence is that of Cyclotide mela-4 from Melicytus latifolius (Norfolk Island mahoe).